Consider the following 607-residue polypeptide: MIELRHEVQGDLVTINVVEHPEDLDGFRDFIRAHQNCLAVDTETTGLDIYSADFRCRLVQFGTQTESWVLPIEDLEMLGREEVHEALDVLNKIVMQNASYDLQVLDRCFGIKMESLWPKILDTQILAKLVDPRPFGAGGFGHSLEELIAEFISKEQAENVKGLMAKLAKEHKTTKAKIWSTIDLYHPEYLTYAGMDTVFTARICSALAPLVPDVSRPLVPYEHKISEICSYIDRRGFLLDVEYSQQLADKWLGEQQVWEAVLLNEYGIEKVNATEDVAEAFEELGHKFTAFTDSGKRKVDKGFYADMIAAGGEKAHLAEMVQEAKKLGKWRTSWVQTFLDTRDSEDRCHTFVNPLQARTSRMSITGIPAQTLPASDWTVRRCFLADPGHVMASIDYQAQELRVLAALSGDRTMIQAFKDGADLHLMTARAAFGDHITKDDPERKYAKTVNFGRVYGGGANTVAEQTGISIETAKQVVDGFDKAYPGVTRYSRKLANEAKRNGYIINPMGRRLPVDRSRTYSALNYQIQSTSRDVTCKALIRLHEAGFTPYLRLPIHDEIVASLPAEKANWGAREIARLMAEEMGPVLIGTDPEVGKRSWGSLYGADY.

Residues 1–213 (MIELRHEVQG…CSALAPLVPD (213 aa)) enclose the 3'-5' exonuclease domain. The tract at residues 214–607 (VSRPLVPYEH…SWGSLYGADY (394 aa)) is polymerase.

The protein belongs to the DNA polymerase type-A family.

The enzyme catalyses DNA(n) + a 2'-deoxyribonucleoside 5'-triphosphate = DNA(n+1) + diphosphate. Its function is as follows. Replicates viral genomic DNA. This polymerase possesses two enzymatic activities: DNA synthesis (polymerase) and an exonucleolytic activity that degrades single-stranded DNA in the 3'-5' direction. The polypeptide is DNA polymerase (44) (Mycobacterium phage D29 (Mycobacteriophage D29)).